A 457-amino-acid chain; its full sequence is Asparagine--tRNA ligase (457 aa).

Belongs to the class-II aminoacyl-tRNA synthetase family. In terms of assembly, homodimer.

It localises to the cytoplasm. The enzyme catalyses tRNA(Asn) + L-asparagine + ATP = L-asparaginyl-tRNA(Asn) + AMP + diphosphate + H(+). The polypeptide is Asparagine--tRNA ligase (Phytoplasma australiense).